The primary structure comprises 218 residues: UPF0598 protein C8orf82 homolog (218 aa).

The protein belongs to the UPF0598 family.

This chain is UPF0598 protein C8orf82 homolog, found in Bos taurus (Bovine).